The following is an 89-amino-acid chain: Small ribosomal subunit protein uS15 (89 aa).

Belongs to the universal ribosomal protein uS15 family. As to quaternary structure, part of the 30S ribosomal subunit. Forms a bridge to the 50S subunit in the 70S ribosome, contacting the 23S rRNA.

Functionally, one of the primary rRNA binding proteins, it binds directly to 16S rRNA where it helps nucleate assembly of the platform of the 30S subunit by binding and bridging several RNA helices of the 16S rRNA. Forms an intersubunit bridge (bridge B4) with the 23S rRNA of the 50S subunit in the ribosome. This is Small ribosomal subunit protein uS15 from Acinetobacter baumannii (strain AB307-0294).